Consider the following 991-residue polypeptide: Integrator complex subunit 8 (991 aa).

Basic and acidic residues predominate over residues methionine 1–alanine 10. Residues methionine 1–threonine 22 are disordered. Polar residues predominate over residues alanine 11 to threonine 22. A WFEF motif motif is present at residues tryptophan 24–leucine 29. 4 TPR repeats span residues cysteine 250 to isoleucine 288, serine 319 to aspartate 355, valine 569 to phenylalanine 602, and histidine 829 to phenylalanine 862.

Belongs to the Integrator subunit 8 family. As to quaternary structure, component of the Integrator complex, composed of core subunits INTS1, INTS2, INTS3, INTS4, INTS5, INTS6, INTS7, INTS8, INTS9/RC74, INTS10, INTS11/CPSF3L, INTS12, INTS13, INTS14 and INTS15. The core complex associates with protein phosphatase 2A subunits PPP2CA and PPP2R1A, to form the Integrator-PP2A (INTAC) complex.

The protein localises to the nucleus. The protein resides in the chromosome. In terms of biological role, component of the integrator complex, a multiprotein complex that terminates RNA polymerase II (Pol II) transcription in the promoter-proximal region of genes. The integrator complex provides a quality checkpoint during transcription elongation by driving premature transcription termination of transcripts that are unfavorably configured for transcriptional elongation: the complex terminates transcription by (1) catalyzing dephosphorylation of the C-terminal domain (CTD) of Pol II subunit POLR2A/RPB1 and SUPT5H/SPT5, (2) degrading the exiting nascent RNA transcript via endonuclease activity and (3) promoting the release of Pol II from bound DNA. The integrator complex is also involved in terminating the synthesis of non-coding Pol II transcripts, such as enhancer RNAs (eRNAs), small nuclear RNAs (snRNAs), telomerase RNAs and long non-coding RNAs (lncRNAs). Within the integrator complex, INTS8 is required for the recruitment of protein phosphatase 2A (PP2A) to transcription pause-release checkpoint. The sequence is that of Integrator complex subunit 8 (ints8) from Xenopus laevis (African clawed frog).